Consider the following 1047-residue polypeptide: tRNA wybutosine-synthesizing protein 4 (1047 aa).

Residues arginine 69, glycine 95, aspartate 122, 169-170, and glutamate 196 contribute to the S-adenosyl-L-methionine site; that span reads DL. The 190-residue stretch at 814-1003 folds into the JmjC domain; it reads GRQYLRSISA…AAGRDVYGNR (190 aa).

This sequence belongs to the methyltransferase superfamily. LCMT family.

It catalyses the reaction 7-[(3S)-3-amino-3-carboxypropyl]wyosine(37) in tRNA(Phe) + S-adenosyl-L-methionine = 7-[(3S)-(3-amino-3-methoxycarbonyl)propyl]wyosine(37) in tRNA(Phe) + S-adenosyl-L-homocysteine. The enzyme catalyses 7-[(3S)-(3-amino-3-methoxycarbonyl)propyl]wyosine(37) in tRNA(Phe) + S-adenosyl-L-methionine + CO2 = wybutosine(37) in tRNA(Phe) + S-adenosyl-L-homocysteine + 2 H(+). It functions in the pathway tRNA modification; wybutosine-tRNA(Phe) biosynthesis. Probable S-adenosyl-L-methionine-dependent methyltransferase that acts as a component of the wybutosine biosynthesis pathway. Wybutosine is a hyper modified guanosine with a tricyclic base found at the 3'-position adjacent to the anticodon of eukaryotic phenylalanine tRNA. May methylate the carboxyl group of leucine residues to form alpha-leucine ester residues. This chain is tRNA wybutosine-synthesizing protein 4 (ppm2), found in Aspergillus fumigatus (strain ATCC MYA-4609 / CBS 101355 / FGSC A1100 / Af293) (Neosartorya fumigata).